The primary structure comprises 156 residues: Melatonin receptor type 1A (156 aa).

3 helical membrane-spanning segments follow: residues 19–39, 62–82, and 115–135; these read LCYV…NLQT, TIAL…FCYL, and FVVF…GLIV.

It belongs to the G-protein coupled receptor 1 family. In terms of tissue distribution, at least in the brain, more precisely in the pars tuberalis and the suprachiasmatic nucleus.

The protein localises to the cell membrane. Its function is as follows. High affinity receptor for melatonin. Likely to mediate the reproductive and circadian actions of melatonin. The activity of this receptor is mediated by pertussis toxin sensitive G proteins that inhibit adenylate cyclase activity. Possibly involved in sleep induction, by melatonin activation of the potassium channel KCNMA1/BK and the dissociation of G-beta and G-gamma subunits, thereby decreasing synaptic transmission. The chain is Melatonin receptor type 1A (Mtnr1a) from Rattus norvegicus (Rat).